The sequence spans 434 residues: Protein maelstrom homolog (434 aa).

The HMG box DNA-binding region spans 4–73 (RRGSRNAYYF…AQGKDAGPWE (70 aa)). The segment at 357–387 (SHFSSSNQEQRSNTPTGDYPSGVKISGQSSS) is disordered. The segment covering 363–372 (NQEQRSNTPT) has biased composition (polar residues).

It belongs to the maelstrom family. As to quaternary structure, interacts with SMARCB1, SIN3B and DDX4. Interacts with piRNA-associated proteins TDRD1, PIWIL1 and PIWIL2. Interacts with TEX19.

Its subcellular location is the cytoplasm. It is found in the nucleus. Plays a central role during spermatogenesis by repressing transposable elements and preventing their mobilization, which is essential for the germline integrity. Acts via the piRNA metabolic process, which mediates the repression of transposable elements during meiosis by forming complexes composed of piRNAs and Piwi proteins and governs the methylation and subsequent repression of transposons. Its association with piP-bodies suggests a participation in the secondary piRNAs metabolic process. Required for the localization of germ-cell factors to the meiotic nuage. The chain is Protein maelstrom homolog (MAEL) from Sus scrofa (Pig).